We begin with the raw amino-acid sequence, 99 residues long: Large ribosomal subunit protein uL23cz/uL23cy (99 aa).

Residues 1–37 (MGGVENPVSTDKAIRLPERKQYSSNAEPNPSKTEVKR) form a disordered region. The segment covering 12–21 (KAIRLPERKQ) has biased composition (basic and acidic residues). Polar residues predominate over residues 22 to 32 (YSSNAEPNPSK).

Belongs to the universal ribosomal protein uL23 family. Part of the 50S ribosomal subunit.

The protein resides in the plastid. The protein localises to the chloroplast. Binds to 23S rRNA. The polypeptide is Large ribosomal subunit protein uL23cz/uL23cy (rpl23-A) (Selaginella uncinata (Blue spike-moss)).